Reading from the N-terminus, the 300-residue chain is Protoheme IX farnesyltransferase (300 aa).

9 consecutive transmembrane segments (helical) span residues 21 to 43 (PRVVELLLLTTVPTMILAQRGVP), 45 to 65 (PLSVLSVLLGGAMSAGAAGAF), 94 to 114 (ASLIFAWMLCVISVLWFLLFV), 117 to 137 (LSALLSAIAVFLYAFFYSIVL), 145 to 167 (IVWGGLAGCMPVLIAWAAVTGSI), 171 to 193 (AIVLFAVVFLWTPPHYWPLSIHY), 213 to 233 (LVVLQVLLYAFAVVACTLLLI), 235 to 255 (VAHMTPLYGLFSAVLGAWFVY), and 272 to 292 (AMHIFSLSNTYLSLVFLSVGI).

Belongs to the UbiA prenyltransferase family. Protoheme IX farnesyltransferase subfamily.

It localises to the cell membrane. The catalysed reaction is heme b + (2E,6E)-farnesyl diphosphate + H2O = Fe(II)-heme o + diphosphate. It participates in porphyrin-containing compound metabolism; heme O biosynthesis; heme O from protoheme: step 1/1. In terms of biological role, converts heme B (protoheme IX) to heme O by substitution of the vinyl group on carbon 2 of heme B porphyrin ring with a hydroxyethyl farnesyl side group. The sequence is that of Protoheme IX farnesyltransferase from Tropheryma whipplei (strain TW08/27) (Whipple's bacillus).